A 378-amino-acid polypeptide reads, in one-letter code: Signal recognition particle receptor FtsY (378 aa).

Residues 184 to 191 (GVNGTGKT), 266 to 270 (DTAGR), and 330 to 333 (TKLD) each bind GTP.

The protein belongs to the GTP-binding SRP family. FtsY subfamily. As to quaternary structure, part of the signal recognition particle protein translocation system, which is composed of SRP and FtsY. SRP is a ribonucleoprotein composed of Ffh and a 4.5S RNA molecule.

It is found in the cell membrane. It localises to the cytoplasm. It carries out the reaction GTP + H2O = GDP + phosphate + H(+). In terms of biological role, involved in targeting and insertion of nascent membrane proteins into the cytoplasmic membrane. Acts as a receptor for the complex formed by the signal recognition particle (SRP) and the ribosome-nascent chain (RNC). Interaction with SRP-RNC leads to the transfer of the RNC complex to the Sec translocase for insertion into the membrane, the hydrolysis of GTP by both Ffh and FtsY, and the dissociation of the SRP-FtsY complex into the individual components. The polypeptide is Signal recognition particle receptor FtsY (Buchnera aphidicola subsp. Acyrthosiphon pisum (strain APS) (Acyrthosiphon pisum symbiotic bacterium)).